Consider the following 1381-residue polypeptide: MASNEGVENRPFPYLTVDADLLSNLRQSAAEGLFHSFDLLVGKDAREAGIKFEVLLGVYTNAIQYVRFLETALAVSCVNTEFKDLSRMTDGKIQFRISVPTIAHGDGRRPSKQRTFIVVKNCHKHHISTEMELSMLDLEILHSIPETPVEYAEYVGAVKTVASALQFGVDALERGLINTVLSVKLRHAPPMFILQTLADPTFTERGFSKTVKSDLIAMFKRHLLEHSFFLDRAENMGSGFSQYVRSRLSEMVAAVSGESVLKGVSTYTTAKGGEPVGGVFIVTDNVLRQLLTFLGEEADNQIMGPSSYASFVVRGENLVTAVSYGRVMRTFEHFMARIVDSPEKAGSTKSDLPAVAAGVEDQPRVPISAAVIKLGNHAVAVESLQKMYNDTQSPYPLNRRMQYSYYFPVGLFMPNPKYTTSAAIKMLDNPTQQLPVEAWIVNKNNLLLAFNLQNALKVLCHPRLHTPAHTLNSLNAAPAPRDRRETYSLQHRRPNHMNVLVIVDEFYDNKYAAPVTDIALKCGLPTEDFLHPSNYDLLRLELHPLYDIYIGRDAGERARHRAVHRLMVGNLPTPLAPAAFQEARGQQFETATSLAHVVDQAVIETVQDTAYDTAYPAFFYVVEAMIHGFEEKFVMNVPLVSLCINTYWERAGRLAFVNSFSMIKFICRHLGNNAISKEAYSMYRKIYGELIALEQALMRLAGSDVVGDESVGQYVCALLDPNLLPPVAYTDIFTHLLTVSDRAPQIIIGNEVYADTLAAPQFIERVGNMDEMAAQFVALYGYRVNGDHDHDFRLHLGPYVDEGHADVLEKIFYYVFLPTCTNAHMCGLGVDFQHVAQTLAYNGPAFSHHFTRDEDILDNLENGTLRDLLEISDLRPTVGMIRDLSASFMTCPTFTRTVRVSVDNDVTQQLAPNPADKRTEQTVLVNGLVAFAFSERTRAVTQCLFHAIPFHMFYGDPRVAATMHQDVATFVMRNPQQRAVEAFNRPEQLFAEYREWHRSPMGKYAAECLPSLVSISGMTAMHIKMSPMAYIAQAKLKIHPGVAMTVVRTDEILSENILFSSRASTSMFIGTPNVSRREARVDAVTFEVHHEMASIDTGLSYSSTMTPARVAAITTDMGIHTQDFFSVFPAEAFGNQQVNDYIKAKVGAQRNGTLLRDPRTYLAGMTNVNGAPGLCHGQQATCEIIVTPVTADVAYFQKSNSPRGRAACVVSCENYNQEVAEGLIYDHSRPDAAYEYRSTVNPWASQLGSLGDIMYNSSYRQTAVPGLYSPCRAFFNKEELLRNNRGLYNMVNEYSQRLGGHPATSNTEVQFVVIAGTDVFLEQPCSFLQEAFPALSASSRALIDEFMSVKQTHAPIHYGHYIIEEVAPVRRILKFGNKVVF.

It belongs to the herpesviridae major capsid protein family. Homomultimer. Makes the hexons and eleven out of twelve pentons. Interacts with triplex proteins 1/TRX1 and 2/TRX2; adjacent capsomers are linked together in groups of three by triplexes, heterotrimeric complexes composed of one molecule of TRX1 and two molecules of TRX2. Interacts with scaffold protein; this interaction allows efficient MCP transport to the host nucleus. Interacts with capsid vertex component 2/CVC2. Interacts with the small capsomere-interacting protein/SCP.

The protein resides in the virion. Its subcellular location is the host nucleus. Functionally, self-assembles to form an icosahedral capsid with a T=16 symmetry, about 200 nm in diameter, and consisting of 150 hexons and 12 pentons (total of 162 capsomers). Hexons form the edges and faces of the capsid and are each composed of six MCP molecules. In contrast, one penton is found at each of the 12 vertices. Eleven of the pentons are MCP pentamers, while the last vertex is occupied by the portal complex. The capsid is surrounded by a layer of proteinaceous material designated the tegument which, in turn, is enclosed in an envelope of host cell-derived lipids containing virus-encoded glycoproteins. This Epstein-Barr virus (strain AG876) (HHV-4) protein is Major capsid protein.